Consider the following 755-residue polypeptide: Putative two-component response regulator-like APRR6 (755 aa).

Positions Ser-14–Phe-128 constitute a Response regulatory domain.

Belongs to the ARR-like family.

It is found in the nucleus. The protein is Putative two-component response regulator-like APRR6 (APRR6) of Arabidopsis thaliana (Mouse-ear cress).